The following is a 962-amino-acid chain: Glycine dehydrogenase (decarboxylating) (962 aa).

Lys709 carries the N6-(pyridoxal phosphate)lysine modification.

The protein belongs to the GcvP family. The glycine cleavage system is composed of four proteins: P, T, L and H. Pyridoxal 5'-phosphate serves as cofactor.

The enzyme catalyses N(6)-[(R)-lipoyl]-L-lysyl-[glycine-cleavage complex H protein] + glycine + H(+) = N(6)-[(R)-S(8)-aminomethyldihydrolipoyl]-L-lysyl-[glycine-cleavage complex H protein] + CO2. In terms of biological role, the glycine cleavage system catalyzes the degradation of glycine. The P protein binds the alpha-amino group of glycine through its pyridoxal phosphate cofactor; CO(2) is released and the remaining methylamine moiety is then transferred to the lipoamide cofactor of the H protein. In Shewanella pealeana (strain ATCC 700345 / ANG-SQ1), this protein is Glycine dehydrogenase (decarboxylating).